The chain runs to 1048 residues: Anguibactin system regulator (1048 aa).

The 75-residue stretch at 965-1039 (PIITASEDRV…AFAIIMDRCR (75 aa)) folds into the Carrier domain.

It belongs to the ATP-dependent AMP-binding enzyme family.

It participates in siderophore biosynthesis; anguibactin biosynthesis. Its function is as follows. Bifunctional protein that plays an essential role in virulence. Plays a role in both the production of the siderophore anguibactin and the regulation of iron transport genes. In Vibrio anguillarum (Listonella anguillarum), this protein is Anguibactin system regulator (angR).